Reading from the N-terminus, the 807-residue chain is Protein WEAK CHLOROPLAST MOVEMENT UNDER BLUE LIGHT 1 (807 aa).

The segment at 1 to 162 is disordered; that stretch reads MEDLKTVEAS…GTPKNVDSHR (162 aa). Positions 31–40 are enriched in polar residues; the sequence is RESNIQSATK. A compositionally biased stretch (low complexity) spans 46-73; the sequence is QSQTDTEETQQSQTDTEETQQSQTDDTT. Residues 138 to 157 are compositionally biased toward polar residues; the sequence is RTVSSPRFSGSPVSTGTPKN. Residue S148 is modified to Phosphoserine. Coiled coils occupy residues 191–429, 457–489, 516–621, and 664–724; these read RMQA…ELVA, DLHA…LKLA, IAVA…ALEE, and AAVS…WRAE. Disordered regions lie at residues 532 to 565 and 722 to 789; these read IASV…EAKS and RAEH…KKKK. 3 stretches are compositionally biased toward basic and acidic residues: residues 537 to 548, 722 to 732, and 739 to 749; these read SKEKDAREKMVE, RAEHEQKRKAG, and KNLKESFEGGK. The span at 761 to 781 shows a compositional bias: polar residues; the sequence is SSPSESYGTEENSETNLSPQT.

Belongs to the WEB family. Interacts with PMI2. As to expression, ubiquitous but preferentially in chloroplast-containing tissues.

It is found in the cytoplasm. Required for the chloroplast avoidance response under high intensity blue light. This avoidance response consists in the relocation of chloroplasts on the anticlinal side of exposed cells. Acts in association with PMI2 to maintain the velocity of chloroplast photorelocation movement via cp-actin filaments regulation. This Arabidopsis thaliana (Mouse-ear cress) protein is Protein WEAK CHLOROPLAST MOVEMENT UNDER BLUE LIGHT 1 (WEB1).